A 173-amino-acid chain; its full sequence is ATP synthase subunit d, mitochondrial (173 aa).

A mitochondrion-targeting transit peptide spans 1-23; it reads MAARSAALKIDWVKVTSSLGLRG.

It belongs to the ATPase d subunit family. In terms of assembly, F-type ATPases have 2 components, CF(1) - the catalytic core - and CF(0) - the membrane proton channel. In yeast, the dimeric form of ATP synthase consists of 17 polypeptides: alpha, beta, gamma, delta, epsilon, 4 (B), 5 (OSCP), 6 (A), 8, 9 (C), d, E (Tim11), f, g, h, i/j and k.

It localises to the mitochondrion inner membrane. In terms of biological role, mitochondrial membrane ATP synthase (F(1)F(0) ATP synthase or Complex V) produces ATP from ADP in the presence of a proton gradient across the membrane which is generated by electron transport complexes of the respiratory chain. F-type ATPases consist of two structural domains, F(1) - containing the extramembraneous catalytic core, and F(0) - containing the membrane proton channel, linked together by a central stalk and a peripheral stalk. During catalysis, ATP synthesis in the catalytic domain of F(1) is coupled via a rotary mechanism of the central stalk subunits to proton translocation. Part of the complex F(0) domain and the peripheric stalk, which acts as a stator to hold the catalytic alpha(3)beta(3) subcomplex and subunit a/ATP6 static relative to the rotary elements. The sequence is that of ATP synthase subunit d, mitochondrial (atp7) from Aspergillus terreus (strain NIH 2624 / FGSC A1156).